The following is a 902-amino-acid chain: Cytosolic 10-formyltetrahydrofolate dehydrogenase (902 aa).

Residues 1 to 310 are hydrolase domain; sequence MKIAVIGQSL…PASQYFKTAD (310 aa). 88-90 serves as a coordination point for (6R)-10-formyltetrahydrofolate; sequence QFI. Residue His-106 is the Proton donor of the active site. Asp-142 serves as a coordination point for (6R)-10-formyltetrahydrofolate. One can recognise a Carrier domain in the interval 318 to 395; that stretch reads EEEQKVSEEI…EFIQMVVRRM (78 aa). Ser-354 bears the O-(pantetheine 4'-phosphoryl)serine mark. The aldehyde dehydrogenase domain stretch occupies residues 417–902; the sequence is TVKIPHQLFI…LKTKAVTIEY (486 aa). NADP(+) is bound by residues 571-573, 597-600, 630-635, 650-651, and 673-674; these read IPW, KPAQ, GSLIGQ, GS, and EL. The active-site Proton acceptor is the Glu-673. Residue Cys-707 is the Proton donor of the active site. NADP(+)-binding positions include Lys-757 and 804 to 806; that span reads ESF.

In the N-terminal section; belongs to the GART family. It in the C-terminal section; belongs to the aldehyde dehydrogenase family. ALDH1L subfamily. As to quaternary structure, homotetramer. Post-translationally, phosphopantetheinylation at Ser-354 by AASDHPPT is required for the formyltetrahydrofolate dehydrogenase activity.

The protein resides in the cytoplasm. It is found in the cytosol. It catalyses the reaction (6R)-10-formyltetrahydrofolate + NADP(+) + H2O = (6S)-5,6,7,8-tetrahydrofolate + CO2 + NADPH + H(+). Functionally, cytosolic 10-formyltetrahydrofolate dehydrogenase that catalyzes the NADP(+)-dependent conversion of 10-formyltetrahydrofolate to tetrahydrofolate and carbon dioxide. May also have an NADP(+)-dependent aldehyde dehydrogenase activity towards formaldehyde, acetaldehyde, propionaldehyde, and benzaldehyde. This Xenopus laevis (African clawed frog) protein is Cytosolic 10-formyltetrahydrofolate dehydrogenase (aldh1l1).